A 252-amino-acid chain; its full sequence is Protein PF0476 (252 aa).

It belongs to the CinA family.

The chain is Protein PF0476 from Pyrococcus furiosus (strain ATCC 43587 / DSM 3638 / JCM 8422 / Vc1).